The following is a 259-amino-acid chain: Deoxyribose-phosphate aldolase (259 aa).

Asp102 functions as the Proton donor/acceptor in the catalytic mechanism. Residue Lys167 is the Schiff-base intermediate with acetaldehyde of the active site. The active-site Proton donor/acceptor is the Lys201.

Belongs to the DeoC/FbaB aldolase family. DeoC type 2 subfamily.

It localises to the cytoplasm. The enzyme catalyses 2-deoxy-D-ribose 5-phosphate = D-glyceraldehyde 3-phosphate + acetaldehyde. It participates in carbohydrate degradation; 2-deoxy-D-ribose 1-phosphate degradation; D-glyceraldehyde 3-phosphate and acetaldehyde from 2-deoxy-alpha-D-ribose 1-phosphate: step 2/2. Its function is as follows. Catalyzes a reversible aldol reaction between acetaldehyde and D-glyceraldehyde 3-phosphate to generate 2-deoxy-D-ribose 5-phosphate. In Klebsiella pneumoniae (strain 342), this protein is Deoxyribose-phosphate aldolase.